A 320-amino-acid polypeptide reads, in one-letter code: MQYAKISGTGSYLPANRVSNDDLAQKVDTSDEWITARTGIKFRHIAAENEKTSDLAAEAAHRALDAAGLDSGEIDLIIVATATPDMQFPSTATIVQQKLGITNGCPAFDVQAVCAGFMYALTTANAYIKSGMAKNALVIGAETFSRIVDWNDRTTCVLFGDGAGAVVLSASDTPGIIHSKLKADGNYLKLLNVPGQIACGKVSGSPYISMDGPGVFKFAVKMLSKIADDVIEEAGYTAAQIDWIVPHQANRRIIESTAKHLGLSMDKVVLTVQDHGNTSAASIPLALDTGIRSGQIKRGQNLLLEGIGGGFAWGAVLLQY.

Catalysis depends on residues Cys114 and His247. Residues 248–252 form an ACP-binding region; that stretch reads QANRR. Asn277 is a catalytic residue.

This sequence belongs to the thiolase-like superfamily. FabH family. In terms of assembly, homodimer.

The protein localises to the cytoplasm. It carries out the reaction malonyl-[ACP] + acetyl-CoA + H(+) = 3-oxobutanoyl-[ACP] + CO2 + CoA. The protein operates within lipid metabolism; fatty acid biosynthesis. In terms of biological role, catalyzes the condensation reaction of fatty acid synthesis by the addition to an acyl acceptor of two carbons from malonyl-ACP. Catalyzes the first condensation reaction which initiates fatty acid synthesis and may therefore play a role in governing the total rate of fatty acid production. Possesses both acetoacetyl-ACP synthase and acetyl transacylase activities. Its substrate specificity determines the biosynthesis of branched-chain and/or straight-chain of fatty acids. The protein is Beta-ketoacyl-[acyl-carrier-protein] synthase III of Neisseria meningitidis serogroup B (strain ATCC BAA-335 / MC58).